Here is a 111-residue protein sequence, read N- to C-terminus: Large ribosomal subunit protein uL22 (111 aa).

Belongs to the universal ribosomal protein uL22 family. In terms of assembly, part of the 50S ribosomal subunit.

Functionally, this protein binds specifically to 23S rRNA; its binding is stimulated by other ribosomal proteins, e.g. L4, L17, and L20. It is important during the early stages of 50S assembly. It makes multiple contacts with different domains of the 23S rRNA in the assembled 50S subunit and ribosome. In terms of biological role, the globular domain of the protein is located near the polypeptide exit tunnel on the outside of the subunit, while an extended beta-hairpin is found that lines the wall of the exit tunnel in the center of the 70S ribosome. The chain is Large ribosomal subunit protein uL22 from Chlamydia trachomatis serovar L2 (strain ATCC VR-902B / DSM 19102 / 434/Bu).